We begin with the raw amino-acid sequence, 115 residues long: Methylmalonyl-CoA decarboxylase subunit delta (115 aa).

Residues 11-31 (WLIMAINMTVVFAVLIALGIL) form a helical membrane-spanning segment. Positions 46 to 70 (EAPAATAPVATPTATPVAPANASAQ) are disordered. Residues 48 to 65 (PAATAPVATPTATPVAPA) are compositionally biased toward low complexity.

It belongs to the OadG family. As to quaternary structure, the methylmalonyl-CoA decarboxylase is composed of five subunits: the carboxyltransferase alpha subunit (MmdA), the tunnel beta subunit (MmdB), the biotin-containing gamma subunit (MmdC), and the delta (MmdD) and epsilon (MmdE) subunits. Post-translationally, the N-terminus is blocked.

Its subcellular location is the cell membrane. It carries out the reaction (S)-methylmalonyl-CoA + Na(+)(in) + H(+)(out) = propanoyl-CoA + Na(+)(out) + CO2. Its activity is regulated as follows. Completely inhibited by avidin. Functionally, subunit of the sodium ion pump methylmalonyl-CoA decarboxylase, which converts the chemical energy of a decarboxylation reaction into an electrochemical gradient of Na(+) ions across the cytoplasmic membrane, thereby creating a sodium ion motive force that is used for ATP synthesis. The delta subunit is required for catalytic activity as well as for the proper assembly of the individual subunits to an enzyme complex. Can also convert malonyl-CoA into acetyl-CoA. In Veillonella parvula (Staphylococcus parvulus), this protein is Methylmalonyl-CoA decarboxylase subunit delta.